The following is a 399-amino-acid chain: Nicotinate phosphoribosyltransferase 1 (399 aa).

Phosphohistidine; by autocatalysis is present on histidine 224.

Belongs to the NAPRTase family. In terms of processing, transiently phosphorylated on a His residue during the reaction cycle. Phosphorylation strongly increases the affinity for substrates and increases the rate of nicotinate D-ribonucleotide production. Dephosphorylation regenerates the low-affinity form of the enzyme, leading to product release.

It catalyses the reaction nicotinate + 5-phospho-alpha-D-ribose 1-diphosphate + ATP + H2O = nicotinate beta-D-ribonucleotide + ADP + phosphate + diphosphate. Its pathway is cofactor biosynthesis; NAD(+) biosynthesis; nicotinate D-ribonucleotide from nicotinate: step 1/1. Its function is as follows. Catalyzes the synthesis of beta-nicotinate D-ribonucleotide from nicotinate and 5-phospho-D-ribose 1-phosphate at the expense of ATP. The protein is Nicotinate phosphoribosyltransferase 1 of Pseudomonas aeruginosa (strain ATCC 15692 / DSM 22644 / CIP 104116 / JCM 14847 / LMG 12228 / 1C / PRS 101 / PAO1).